The chain runs to 201 residues: ATP-dependent Clp protease proteolytic subunit (201 aa).

Residue Ser-100 is the Nucleophile of the active site. The active site involves His-125.

Belongs to the peptidase S14 family. Component of the chloroplastic Clp protease core complex.

It localises to the plastid. It is found in the chloroplast stroma. The enzyme catalyses Hydrolysis of proteins to small peptides in the presence of ATP and magnesium. alpha-casein is the usual test substrate. In the absence of ATP, only oligopeptides shorter than five residues are hydrolyzed (such as succinyl-Leu-Tyr-|-NHMec, and Leu-Tyr-Leu-|-Tyr-Trp, in which cleavage of the -Tyr-|-Leu- and -Tyr-|-Trp bonds also occurs).. In terms of biological role, cleaves peptides in various proteins in a process that requires ATP hydrolysis. Has a chymotrypsin-like activity. Plays a major role in the degradation of misfolded proteins. This chain is ATP-dependent Clp protease proteolytic subunit, found in Chloranthus spicatus (Chulantree).